We begin with the raw amino-acid sequence, 651 residues long: Choline transporter-like protein 1 (651 aa).

Residues 1 to 25 (MGCCGSTQNSKRDWRPLEEHSCTDI) lie on the Cytoplasmic side of the membrane. The chain crosses the membrane as a helical span at residues 26–46 (PWLLLFILFCVGMGFICGFSI). Topologically, residues 47–208 (ATGAASRLVF…RLISGVMTSK (162 aa)) are extracellular. 2 N-linked (GlcNAc...) asparagine glycosylation sites follow: Asn-131 and Asn-176. A helical membrane pass occupies residues 209 to 229 (EIIMGLCLLSLVLSMILMVII). At 230-234 (RYISR) the chain is on the cytoplasmic side. A helical membrane pass occupies residues 235-255 (VLVWIITILVVLGSLGGTGVL). The Extracellular segment spans residues 256-284 (WWLYADNKKSLNENLPPDQLQVSKDNLQA). Residues 285–305 (LLVYAIAATVFTVILLLMMLI) form a helical membrane-spanning segment. Topologically, residues 306–311 (MRKRVA) are cytoplasmic. Residues 312–332 (LTIALFNVAGKVFIHLPLLVF) traverse the membrane as a helical segment. At 333 to 334 (QP) the chain is on the extracellular side. The helical transmembrane segment at 335-355 (FWTFFALLLFWVYWVMVLLFL) threads the bilayer. Topologically, residues 356-376 (GTAGDPFTNEQGFVEFRINGP) are cytoplasmic. The helical transmembrane segment at 377–397 (LQYMWWYHLVGLIWISEFILA) threads the bilayer. Over 398-438 (CQQMTIAGAVVTYYFTRNKNDLPFTPILASVNRLIRYHLGT) the chain is Extracellular. The helical transmembrane segment at 439 to 459 (VAKGAFIITLVKIPRMILMYI) threads the bilayer. Over 460 to 533 (HSQLKGKENA…RVAAINTVGD (74 aa)) the chain is Cytoplasmic. The chain crosses the membrane as a helical span at residues 534–554 (FMLFLGKILIVSCTGLAGIML). Topologically, residues 555–562 (LNYQRDYT) are extracellular. The helical transmembrane segment at 563 to 583 (VWVLPLIIVCLFAFLVAHCFL) threads the bilayer. Residues 584 to 651 (SIYEMVVDVL…KPMASGTSTA (68 aa)) are Cytoplasmic-facing. Residues 629–651 (LKEPGSTAEGRELKPMASGTSTA) are disordered.

The protein belongs to the CTL (choline transporter-like) family.

The protein resides in the cell membrane. It localises to the mitochondrion outer membrane. It catalyses the reaction choline(out) + n H(+)(in) = choline(in) + n H(+)(out). The catalysed reaction is ethanolamine(out) + n H(+)(in) = ethanolamine(in) + n H(+)(out). Its function is as follows. Choline/H+ antiporter. Also acts as a high-affinity ethanolamine/H+ antiporter, regulating the supply of extracellular ethanolamine (Etn) for the CDP-Etn pathway, redistribute intracellular Etn and balance the CDP-Cho and CDP-Etn arms of the Kennedy pathway. Involved in membrane synthesis and myelin production. In Xenopus laevis (African clawed frog), this protein is Choline transporter-like protein 1 (slc44a1).